Reading from the N-terminus, the 565-residue chain is Sensor histidine kinase MtrB (565 aa).

A compositionally biased stretch (basic residues) spans 1 to 13 (MMWGSRRRTRSRW). Residues 1–21 (MMWGSRRRTRSRWGRSGPMTR) form a disordered region. 2 helical membrane passes run 42–62 (VVAL…FVLT) and 213–233 (GTMI…ALLV). The 53-residue stretch at 235–287 (RQVVVPVRSASRIAERFAEGHLSERMPVRGEDDMARLAMSFNDMAESLSRQIT) folds into the HAMP domain. One can recognise a Histidine kinase domain in the interval 302–519 (DVSHELRTPL…CFRLTLPLVR (218 aa)). Phosphohistidine; by autocatalysis is present on His-305. The segment at 524–565 (TTSPLPMKPIPQPSPSGGQSPSTGPQHAKDRARQREHAERSL) is disordered. Positions 538-549 (PSGGQSPSTGPQ) are enriched in low complexity. The segment covering 550 to 565 (HAKDRARQREHAERSL) has biased composition (basic and acidic residues).

The protein resides in the cell membrane. It catalyses the reaction ATP + protein L-histidine = ADP + protein N-phospho-L-histidine.. Member of the two-component regulatory system MtrA/MtrB. Seems to function as a membrane-associated protein kinase that phosphorylates MtrA in response to environmental signals. This Mycolicibacterium paratuberculosis (strain ATCC BAA-968 / K-10) (Mycobacterium paratuberculosis) protein is Sensor histidine kinase MtrB (mtrB).